The chain runs to 267 residues: 3-methyl-2-oxobutanoate hydroxymethyltransferase (267 aa).

Mg(2+) is bound by residues Asp-46 and Asp-85. Residues 46 to 47 (DS), Asp-85, and Lys-115 contribute to the 3-methyl-2-oxobutanoate site. Glu-117 is a Mg(2+) binding site. Catalysis depends on Glu-184, which acts as the Proton acceptor.

The protein belongs to the PanB family. As to quaternary structure, homodecamer; pentamer of dimers. Mg(2+) serves as cofactor.

It is found in the cytoplasm. The enzyme catalyses 3-methyl-2-oxobutanoate + (6R)-5,10-methylene-5,6,7,8-tetrahydrofolate + H2O = 2-dehydropantoate + (6S)-5,6,7,8-tetrahydrofolate. It participates in cofactor biosynthesis; (R)-pantothenate biosynthesis; (R)-pantoate from 3-methyl-2-oxobutanoate: step 1/2. In terms of biological role, catalyzes the reversible reaction in which hydroxymethyl group from 5,10-methylenetetrahydrofolate is transferred onto alpha-ketoisovalerate to form ketopantoate. The sequence is that of 3-methyl-2-oxobutanoate hydroxymethyltransferase from Geotalea daltonii (strain DSM 22248 / JCM 15807 / FRC-32) (Geobacter daltonii).